A 711-amino-acid polypeptide reads, in one-letter code: Hydroperoxide isomerase ALOXE3 (711 aa).

One can recognise a PLAT domain in the interval 2–119 (AVYRLCVTTG…TVELRPGTAR (118 aa)). Positions 120 to 711 (TICQDSLPLL…PPLIENSVSI (592 aa)) constitute a Lipoxygenase domain. The Fe cation site is built by His-408, His-413, His-588, Asn-592, and Ile-711.

This sequence belongs to the lipoxygenase family. Fe cation serves as cofactor. Skin specific.

Its subcellular location is the cytoplasm. It catalyses the reaction a hydroperoxyeicosatetraenoate = a hydroxy-epoxy-eicosatetraenoate. It carries out the reaction (8S)-hydroperoxy-(5Z,9E,11Z,14Z)-eicosatetraenoate = (10R)-hydroxy-(8S,9S)-epoxy-(5Z,11Z,14Z)-eicosatrienoate. The catalysed reaction is (12R)-hydroperoxy-(5Z,8Z,10E,14Z)-eicosatetraenoate = (8R)-hydroxy-(11R,12R)-epoxy-(5Z,9E,14Z)-eicosatrienoate. The enzyme catalyses (12S)-hydroperoxy-(5Z,8Z,10E,14Z)-eicosatetraenoate = (8R)-hydroxy-(11S,12S)-epoxy-(5Z,9E,14Z)-eicosatrienoate. It catalyses the reaction (12S)-hydroperoxy-(5Z,8Z,10E,14Z)-eicosatetraenoate = (10R)-hydroxy-(11S,12S)-epoxy-(5Z,8Z,14Z)-eicosatrienoate. It carries out the reaction (15S)-hydroperoxy-(5Z,8Z,11Z,13E)-eicosatetraenoate = (13R)-hydroxy-(14S,15S)-epoxy-(5Z,8Z,11Z)-eicosatrienoate. The catalysed reaction is (13S)-hydroperoxy-(9Z,11E)-octadecadienoate = 11-hydroxy-(12S,13S)-epoxy-(9Z)-octadecenoate. The enzyme catalyses (5S)-hydroperoxy-(6E,8Z,11Z,14Z)-eicosatetraenoate = 7R-hydroxy-5S,6S-epoxy-(8Z,11Z,14Z)-eicosatrienoate. It catalyses the reaction N-[omega-(9R)-hydroperoxy-(10E,12Z)-octadecadienoyloxy]acyl-beta-D-glucosyl-(1&lt;-&gt;1)-octadecasphing-4E-enine = a N-[omega-(9R,10R)-epoxy-(13R)-hydroxy-(11E)-octadecenoyloxy]acyl-beta-D-glucosyl-(1&lt;-&gt;1)-sphing-4E-enine. It carries out the reaction a N-[omega-(9R)-hydroperoxy-(10E,12Z)-octadecadienoyloxy]-acylsphin-4E-enine = a N-[omega-(9R,10R)-epoxy-(13R)-hydroxy-(11E)-octadecenoyloxy]-acylsphing-4E-enine. The catalysed reaction is a hydroperoxyeicosatetraenoate = an oxoeicosatetraenoate + H2O. The enzyme catalyses (8R)-hydroperoxy-(5Z,9E,11Z,14Z)-eicosatetraenoate = 8-oxo-(5Z,9E,11Z,14Z)-eicosatetraenoate + H2O. It catalyses the reaction (8S)-hydroperoxy-(5Z,9E,11Z,14Z)-eicosatetraenoate = 8-oxo-(5Z,9E,11Z,14Z)-eicosatetraenoate + H2O. It carries out the reaction (12R)-hydroperoxy-(5Z,8Z,10E,14Z)-eicosatetraenoate = 12-oxo-(5Z,8Z,10E,14Z)-eicosatetraenoate + H2O. The catalysed reaction is (12S)-hydroperoxy-(5Z,8Z,10E,14Z)-eicosatetraenoate = 12-oxo-(5Z,8Z,10E,14Z)-eicosatetraenoate + H2O. The enzyme catalyses (15S)-hydroperoxy-(5Z,8Z,11Z,13E)-eicosatetraenoate = 15-oxo-(5Z,8Z,11Z,13E)-eicosatetraenoate + H2O. It catalyses the reaction (13S)-hydroperoxy-(9Z,11E)-octadecadienoate = 13-oxo-(9Z,11E)-octadecadienoate + H2O. The protein operates within lipid metabolism; hydroperoxy eicosatetraenoic acid biosynthesis. It participates in lipid metabolism; sphingolipid metabolism. In terms of biological role, non-heme iron-containing lipoxygenase which is atypical in that it displays a prominent hydroperoxide isomerase activity and a reduced lipoxygenases activity. The hydroperoxide isomerase activity catalyzes the isomerization of hydroperoxides, derived from arachidonic and linoleic acid by ALOX12B, into hepoxilin-type epoxyalcohols and ketones. In presence of oxygen, oxygenates polyunsaturated fatty acids, including arachidonic acid, to produce fatty acid hydroperoxides. In the skin, acts downstream of ALOX12B on the linoleate moiety of esterified omega-hydroxyacyl-sphingosine (EOS) ceramides to produce an epoxy-ketone derivative, a crucial step in the conjugation of omega-hydroxyceramide to membrane proteins. Therefore plays a crucial role in the synthesis of corneocytes lipid envelope and the establishment of the skin barrier to water loss. In parallel, it may have a signaling function in barrier formation through the production of hepoxilins metabolites. Also plays a role in adipocyte differentiation through hepoxilin A3 and hepoxilin B3 production which in turn activate PPARG. Through the production of hepoxilins in the spinal cord, it may regulate inflammatory tactile allodynia. This chain is Hydroperoxide isomerase ALOXE3, found in Mus musculus (Mouse).